The following is a 166-amino-acid chain: 3-hydroxyacyl-[acyl-carrier-protein] dehydratase FabZ (166 aa).

The active site involves histidine 72.

It belongs to the thioester dehydratase family. FabZ subfamily.

The protein localises to the cytoplasm. It catalyses the reaction a (3R)-hydroxyacyl-[ACP] = a (2E)-enoyl-[ACP] + H2O. Functionally, involved in unsaturated fatty acids biosynthesis. Catalyzes the dehydration of short chain beta-hydroxyacyl-ACPs and long chain saturated and unsaturated beta-hydroxyacyl-ACPs. The protein is 3-hydroxyacyl-[acyl-carrier-protein] dehydratase FabZ of Synechococcus sp. (strain JA-2-3B'a(2-13)) (Cyanobacteria bacterium Yellowstone B-Prime).